The sequence spans 309 residues: Porphobilinogen deaminase (309 aa).

Residue Cys234 is modified to S-(dipyrrolylmethanemethyl)cysteine.

Belongs to the HMBS family. In terms of assembly, monomer. Dipyrromethane serves as cofactor.

It catalyses the reaction 4 porphobilinogen + H2O = hydroxymethylbilane + 4 NH4(+). Its pathway is porphyrin-containing compound metabolism; protoporphyrin-IX biosynthesis; coproporphyrinogen-III from 5-aminolevulinate: step 2/4. In terms of biological role, tetrapolymerization of the monopyrrole PBG into the hydroxymethylbilane pre-uroporphyrinogen in several discrete steps. The protein is Porphobilinogen deaminase (hemC) of Mycobacterium bovis (strain ATCC BAA-935 / AF2122/97).